The following is a 215-amino-acid chain: Peroxiredoxin-5, mitochondrial (215 aa).

A mitochondrion-targeting transit peptide spans 1–53 (MGLAGVCVLRRSAGYILGGAAGQSVAATAAARRRSEGGWASGGVRSFSRAAAA). The Thioredoxin domain occupies 57 to 215 (IKVGDAIPAV…SLAPSIISQL (159 aa)). Lysine 76 carries the post-translational modification N6-acetyllysine. Position 84 is an N6-acetyllysine; alternate (lysine 84). Lysine 84 is subject to N6-succinyllysine; alternate. Cysteine 101 serves as the catalytic Cysteine sulfenic acid (-SOH) intermediate. Residue cysteine 101 is the site of S-palmitoyl cysteine attachment. A disulfide bridge connects residues cysteine 101 and cysteine 205. Lysine 117 is modified (N6-succinyllysine). Residues serine 172 and serine 183 each carry the phosphoserine modification. A Microbody targeting signal motif is present at residues 213 to 215 (SQL).

The protein belongs to the peroxiredoxin family. Prx5 subfamily. In terms of assembly, monomer. Post-translationally, S-palmitoylated. Palmitoylation occurs on the active site, inhibiting its reactivity; therefore PRDX5 palmitoylation status determines its antioxidant capacity. In terms of processing, S-palmitoylated. Depalmitoylated by ABHD10.

The protein localises to the mitochondrion. It is found in the cytoplasm. It localises to the peroxisome matrix. It carries out the reaction a hydroperoxide + [thioredoxin]-dithiol = an alcohol + [thioredoxin]-disulfide + H2O. Its function is as follows. Thiol-specific peroxidase that catalyzes the reduction of hydrogen peroxide and organic hydroperoxides to water and alcohols, respectively. Plays a role in cell protection against oxidative stress by detoxifying peroxides and as sensor of hydrogen peroxide-mediated signaling events. The chain is Peroxiredoxin-5, mitochondrial (PRDX5) from Papio hamadryas (Hamadryas baboon).